We begin with the raw amino-acid sequence, 421 residues long: Tyrosine--tRNA ligase (421 aa).

Tyr-36 provides a ligand contact to L-tyrosine. Positions 41-50 match the 'HIGH' region motif; it reads PTADSLHIGH. 2 residues coordinate L-tyrosine: Tyr-170 and Gln-174. Residues 231–235 carry the 'KMSKS' region motif; the sequence is KFGKS. ATP is bound at residue Lys-234. Residues 353–420 form the S4 RNA-binding domain; sequence TNIVEALIET…KKKYFMVNYQ (68 aa).

This sequence belongs to the class-I aminoacyl-tRNA synthetase family. TyrS type 1 subfamily. Homodimer.

It localises to the cytoplasm. It catalyses the reaction tRNA(Tyr) + L-tyrosine + ATP = L-tyrosyl-tRNA(Tyr) + AMP + diphosphate + H(+). Functionally, catalyzes the attachment of tyrosine to tRNA(Tyr) in a two-step reaction: tyrosine is first activated by ATP to form Tyr-AMP and then transferred to the acceptor end of tRNA(Tyr). This Staphylococcus epidermidis (strain ATCC 35984 / DSM 28319 / BCRC 17069 / CCUG 31568 / BM 3577 / RP62A) protein is Tyrosine--tRNA ligase.